We begin with the raw amino-acid sequence, 392 residues long: Extracellular metalloproteinase 4 (392 aa).

Positions 1-9 (VHSVVDYVS) are excised as a propeptide. N-linked (GlcNAc...) asparagine glycosylation is found at N27 and N176. A Zn(2+)-binding site is contributed by H193. E194 is an active-site residue. Position 197 (H197) interacts with Zn(2+). 2 N-linked (GlcNAc...) asparagine glycosylation sites follow: N359 and N385.

The protein belongs to the peptidase M36 family. Zn(2+) serves as cofactor.

Its subcellular location is the secreted. Functionally, secreted metalloproteinase probably acting as a virulence factor. The polypeptide is Extracellular metalloproteinase 4 (MEP4) (Trichophyton violaceum).